A 117-amino-acid chain; its full sequence is Ribosome-binding factor A (117 aa).

The protein belongs to the RbfA family. Monomer. Binds 30S ribosomal subunits, but not 50S ribosomal subunits or 70S ribosomes.

It localises to the cytoplasm. In terms of biological role, one of several proteins that assist in the late maturation steps of the functional core of the 30S ribosomal subunit. Associates with free 30S ribosomal subunits (but not with 30S subunits that are part of 70S ribosomes or polysomes). Required for efficient processing of 16S rRNA. May interact with the 5'-terminal helix region of 16S rRNA. The sequence is that of Ribosome-binding factor A from Leuconostoc citreum (strain KM20).